The following is a 237-amino-acid chain: Ribosomal RNA small subunit methyltransferase G (237 aa).

Residues Gly78, Phe83, 129–130, and Arg148 each bind S-adenosyl-L-methionine; that span reads AE.

Belongs to the methyltransferase superfamily. RNA methyltransferase RsmG family.

The protein resides in the cytoplasm. Functionally, specifically methylates the N7 position of a guanine in 16S rRNA. This Streptococcus pyogenes serotype M12 (strain MGAS9429) protein is Ribosomal RNA small subunit methyltransferase G.